The sequence spans 79 residues: Conotoxin 8 (79 aa).

Positions 1 to 22 (MKLTCVLIITVLFLTASQLITA) are cleaved as a signal peptide. Residues 23–47 (DYSRGQRQYRAVRLGDEMRNFKGAR) constitute a propeptide that is removed on maturation. 3 cysteine pairs are disulfide-bonded: C49–C62, C56–C67, and C61–C77.

It belongs to the conotoxin O1 superfamily. Expressed by the venom duct.

It localises to the secreted. This is Conotoxin 8 from Conus vexillum (Flag cone).